The sequence spans 277 residues: Uracil phosphoribosyltransferase homolog (277 aa).

The tract at residues 1-69 (MEAMPCHNQR…AAAPSPAAED (69 aa)) is disordered. Over residues 37 to 69 (AEPSEGSSSGSPSPDSSSGSNGAAAAPSPAAED) the composition is skewed to low complexity. Residues Arg101, Arg110, and 144 to 147 (EKGN) contribute to the GTP site. Residue Arg154 coordinates 5-phospho-alpha-D-ribose 1-diphosphate. GTP-binding residues include Arg171 and Arg200. 206–214 (YPILSTGNT) serves as a coordination point for 5-phospho-alpha-D-ribose 1-diphosphate. 267-269 (THF) is a uracil binding site.

It belongs to the UPRTase family.

The protein localises to the cytoplasm. It is found in the nucleus. The protein is Uracil phosphoribosyltransferase homolog (UPRT) of Gallus gallus (Chicken).